The primary structure comprises 130 residues: Anti-adapter protein IraD (130 aa).

The protein belongs to the GpW/Gp25 family. IraD subfamily. As to quaternary structure, interacts with RssB.

It localises to the cytoplasm. In terms of biological role, inhibits RpoS proteolysis by regulating RssB activity, thereby increasing the stability of the sigma stress factor RpoS during oxidative stress. Its effect on RpoS stability is due to its interaction with RssB, which probably blocks the interaction of RssB with RpoS, and the consequent delivery of the RssB-RpoS complex to the ClpXP protein degradation pathway. The polypeptide is Anti-adapter protein IraD (Escherichia coli O139:H28 (strain E24377A / ETEC)).